The following is a 302-amino-acid chain: Thioredoxin-like protein CDSP32, chloroplastic (302 aa).

Residues methionine 1 to lysine 56 constitute a chloroplast transit peptide. Residues histidine 163–valine 298 enclose the Thioredoxin domain. Residues cysteine 219 and cysteine 222 each act as nucleophile in the active site. Cysteine 219 and cysteine 222 are disulfide-bonded.

This sequence belongs to the thioredoxin family. In terms of assembly, interacts with the plastidial peroxiredoxin BAS1.

The protein resides in the plastid. Its subcellular location is the chloroplast stroma. Functionally, probable thiol-disulfide oxidoreductase involved in resistance to oxidative stress. May participate in the reduction of alkyl hydroperoxides derived from oxidative stress by acting as a physiological electron donor to the BAS1 peroxiredoxin. May regenerate methionine sulfoxide reductase B1 (MSRB1) activity through sulfenic acid reduction. The sequence is that of Thioredoxin-like protein CDSP32, chloroplastic (CDSP32) from Arabidopsis thaliana (Mouse-ear cress).